A 208-amino-acid chain; its full sequence is Photosystem I reaction center subunit II-1, chloroplastic (208 aa).

Residues 1 to 45 (MATQAAGIFNSAITTAATSGVKKLHFFSTTHRPKSLSFTKTAIRA) constitute a chloroplast transit peptide. The residue at position 48 (T48) is a Phosphothreonine. Residues 49 to 72 (DSSAAAAAAPATKEAPVGFTPPQL) are disordered. The segment covering 50-64 (SSAAAAAAPATKEAP) has biased composition (low complexity). Residues 141–149 (RLRSKYKIT) form a ferredoxin and ferredoxin-oxidoreductase binding region.

This sequence belongs to the PsaD family. In terms of assembly, interacts with PGRL1A and PGRL1B. Phosphorylated by a threonine specific thylakoid kinase in a light activated and redox-dependent manner.

It is found in the plastid. Its subcellular location is the chloroplast thylakoid membrane. PsaD can form complexes with ferredoxin and ferredoxin-oxidoreductase in photosystem I (PS I) reaction center. PSAD may encode the ferredoxin-docking protein. This Arabidopsis thaliana (Mouse-ear cress) protein is Photosystem I reaction center subunit II-1, chloroplastic (psaD1).